Consider the following 466-residue polypeptide: Ribulose bisphosphate carboxylase large chain (466 aa).

Lys5 bears the N6,N6,N6-trimethyllysine mark. 2 residues coordinate substrate: Asn114 and Thr164. The active-site Proton acceptor is Lys166. Residue Lys168 participates in substrate binding. Mg(2+)-binding residues include Lys192, Asp194, and Glu195. Lys192 is subject to N6-carboxylysine. His285 serves as the catalytic Proton acceptor. Substrate is bound by residues Arg286, His318, and Ser370.

Belongs to the RuBisCO large chain family. Type I subfamily. In terms of assembly, heterohexadecamer of 8 large chains and 8 small chains; disulfide-linked. The disulfide link is formed within the large subunit homodimers. Mg(2+) serves as cofactor. The disulfide bond which can form in the large chain dimeric partners within the hexadecamer appears to be associated with oxidative stress and protein turnover.

The protein resides in the plastid. It is found in the chloroplast. It carries out the reaction 2 (2R)-3-phosphoglycerate + 2 H(+) = D-ribulose 1,5-bisphosphate + CO2 + H2O. It catalyses the reaction D-ribulose 1,5-bisphosphate + O2 = 2-phosphoglycolate + (2R)-3-phosphoglycerate + 2 H(+). Functionally, ruBisCO catalyzes two reactions: the carboxylation of D-ribulose 1,5-bisphosphate, the primary event in carbon dioxide fixation, as well as the oxidative fragmentation of the pentose substrate in the photorespiration process. Both reactions occur simultaneously and in competition at the same active site. This chain is Ribulose bisphosphate carboxylase large chain, found in Saururus cernuus (Lizard's tail).